Here is a 121-residue protein sequence, read N- to C-terminus: Prefoldin subunit beta (121 aa).

It belongs to the prefoldin subunit beta family. As to quaternary structure, heterohexamer of two alpha and four beta subunits.

It localises to the cytoplasm. Its function is as follows. Molecular chaperone capable of stabilizing a range of proteins. Seems to fulfill an ATP-independent, HSP70-like function in archaeal de novo protein folding. This Methanothermobacter thermautotrophicus (strain ATCC 29096 / DSM 1053 / JCM 10044 / NBRC 100330 / Delta H) (Methanobacterium thermoautotrophicum) protein is Prefoldin subunit beta (pfdB).